The sequence spans 498 residues: Zinc finger protein 497 (498 aa).

Residues 30 to 104 (SEGAVSGGWG…LRPSPLPEEP (75 aa)) form a disordered region. 14 C2H2-type zinc fingers span residues 106 to 128 (CRCGECGKAFSQGSYLLQHRRVH), 134 to 156 (YTCPECGKAFAWSSNLSQHQRIH), 162 to 184 (YACRECGKAFRAHSQLIHHQETH), 190 to 212 (FRCPDCGKSFGRSTTLVQHRRTH), 218 to 240 (YECPECGKAFSWNSNFLEHRRVH), 246 to 268 (HACRDCGKAFSQSSNLAEHLKIH), 274 to 296 (HACPDCGKAFVRVAGLRQHRRTH), 302 to 324 (FPCAECGKAFRESSQLLQHQRTH), 330 to 352 (FECAECGQAFVMGSYLAEHRRVH), 358 to 380 (HACAQCGKAFSQRSNLLSHRRTH), 386 to 408 (FACADCGKAFRGSSGLAHHRLSH), 414 to 436 (FACAECGKAFRGSSELRQHQRLH), 442 to 464 (FVCAHCSKAFVRKSELLSHRRTH), and 470 to 492 (YACGECGKPFSHRCNLNEHQKRH).

The protein belongs to the krueppel C2H2-type zinc-finger protein family.

It is found in the nucleus. Functionally, may be involved in transcriptional regulation. This chain is Zinc finger protein 497 (ZNF497), found in Homo sapiens (Human).